The sequence spans 212 residues: Maleylpyruvate isomerase (212 aa).

A GST N-terminal domain is found at 1–80; sequence MKLYNFWRSG…WLEEQYPTPA (80 aa). Glutathione is bound by residues 9-11, H38, V52, 64-65, 102-104, 108-110, and R176; these read SGT, QS, DIH, and NRR. In terms of domain architecture, GST C-terminal spans 85 to 212; that stretch reads DADGRQRVRA…AAPAAQPDSA (128 aa).

It belongs to the GST superfamily. Zeta family. Homodimer. Glutathione is required as a cofactor.

It catalyses the reaction 3-maleylpyruvate = 3-fumarylpyruvate. Its pathway is aromatic compound metabolism; naphthalene degradation. Functionally, catalyzes the GSH-dependent isomerization of maleylpyruvate to fumarylpyruvate which is subsequently processed by NagK to form pyruvate and fumarate. This is Maleylpyruvate isomerase from Ralstonia sp.